The primary structure comprises 594 residues: (-)-endo-fenchol synthase, chloroplastic (594 aa).

Residues 1–50 constitute a chloroplast transit peptide; it reads MSSLVMHVGIVNKPAITYLPTLSRRASNLHNVSSTRLQTSCSLQLDYKPV. Mg(2+) contacts are provided by D348, D352, D492, and E500. Residues 348–352 carry the DDXXD motif motif; the sequence is DDIYD.

The protein belongs to the terpene synthase family. Tpsa subfamily. Requires Mg(2+) as cofactor. Mn(2+) serves as cofactor. As to expression, expressed at low levels in leaves.

It localises to the plastid. The protein localises to the chloroplast. It catalyses the reaction (2E)-geranyl diphosphate = alpha-pinene + diphosphate. The enzyme catalyses (2E)-geranyl diphosphate + H2O = (1S,2S,4R)-endo-fenchol + diphosphate. It carries out the reaction (2E)-geranyl diphosphate = limonene + diphosphate. It functions in the pathway secondary metabolite biosynthesis; terpenoid biosynthesis. Monoterpene synthase involved in the biosynthesis of volatile compounds widely used in aromatherapy and folk medicine, and present in culinary herbs. Mediates the conversion of (2E)-geranyl diphosphate (GPP) into alpha fenchol, limonene and alpha-pinene and, as minor compounds, into beta-myrcene, alpha-terpinolene and alpha-phellandrene. This chain is (-)-endo-fenchol synthase, chloroplastic, found in Lavandula stoechas (Butterfly lavender).